We begin with the raw amino-acid sequence, 91 residues long: MSDERTPQRSSGPRKKRPFQRRKVCRFCADKQVSIDYKDPRTLRYFISERGKIIPRRISGNCAKHQREITEAIKRARNIALLPIAGSHASQ.

Residues 1–21 (MSDERTPQRSSGPRKKRPFQR) are disordered. Residues 12–21 (GPRKKRPFQR) are compositionally biased toward basic residues.

This sequence belongs to the bacterial ribosomal protein bS18 family. Part of the 30S ribosomal subunit. Forms a tight heterodimer with protein bS6.

Functionally, binds as a heterodimer with protein bS6 to the central domain of the 16S rRNA, where it helps stabilize the platform of the 30S subunit. This Geotalea uraniireducens (strain Rf4) (Geobacter uraniireducens) protein is Small ribosomal subunit protein bS18.